The sequence spans 500 residues: MTIFDNYEVWFVIGSQHLYGPETLRQVTQHAEHVVKALNTEAKLPCKLVLKPLGTTPDEITAICRDANYDDRCAGLVVWLHTFSPAKMWINGLTMLNKPLLQFHTQFNAALPWDSIDMDFMNLNQTAHGGREFGFIGARMRQQHAVVTGHWQDKQAHERIGSWMRQAVSKQDTRHLKVCRFGDNMREVAVTDGDKVAAQIKFGFSVNTWAVGDLVQVVNSISDGDVNALVDEYESCYTMTPATQIHGEKRQNVLEAARIELGMKRFLEQGGFHAFTTTFEDLHGLKQLPGLAVQRLMQQGYGFAGEGDWKTAALLRIMKVMSTGLQGGTSFMEDYTYHFEKGNDLVLGSHMLEVCPSIAAEEKPILDVQHLGIGGKDDPARLIFNTQTGPAIVASLIDLGDRYRLLVNCIDTVKTPHSLPKLPVANALWKAQPDLPTASEAWILAGGAHHTVFSHALNLNDMRQFAEMHDIEITVIDNDTRLPAFKDALRWNEVYYGFRR.

The Mn(2+) site is built by Glu-306, Glu-333, His-350, and His-450.

The protein belongs to the arabinose isomerase family. As to quaternary structure, homohexamer. Mn(2+) is required as a cofactor.

The enzyme catalyses beta-L-arabinopyranose = L-ribulose. The protein operates within carbohydrate degradation; L-arabinose degradation via L-ribulose; D-xylulose 5-phosphate from L-arabinose (bacterial route): step 1/3. Catalyzes the conversion of L-arabinose to L-ribulose. This chain is L-arabinose isomerase, found in Escherichia coli O157:H7.